A 243-amino-acid polypeptide reads, in one-letter code: MEWEDEAFVLSARVHGETGAIVELLTQERGKFVAHVSGAASRRMKPFLQAGAKVIARYRARMSDQMGAATLEPMGEGPSSLFDEPLALSGLSAAASVAAGALPEREAHPGAFHALEALIAALAIPAIWPAVYVRFEAGLLQDLGFGLDLSKCAATGSLDDLVYVSPRTGRAVSRAAGQPYHDKLLPLPPFMLSAQGGLVEGDVKAGLDITGHFLEQFVFHPLNRPLPPARVWLLDRLGEAGRL.

Belongs to the RecO family.

Functionally, involved in DNA repair and RecF pathway recombination. In Caulobacter sp. (strain K31), this protein is DNA repair protein RecO.